The primary structure comprises 229 residues: Ribosome maturation factor RimM (229 aa).

Residues 1 to 21 (MAGHDSGNAKRGRSPSFGVFV) form a disordered region. One can recognise a PRC barrel domain in the interval 148–229 (ADEFYWVDLI…RVVVDWEADY (82 aa)).

This sequence belongs to the RimM family. Binds ribosomal protein uS19.

Its subcellular location is the cytoplasm. Its function is as follows. An accessory protein needed during the final step in the assembly of 30S ribosomal subunit, possibly for assembly of the head region. Essential for efficient processing of 16S rRNA. May be needed both before and after RbfA during the maturation of 16S rRNA. It has affinity for free ribosomal 30S subunits but not for 70S ribosomes. This chain is Ribosome maturation factor RimM, found in Burkholderia pseudomallei (strain 1106a).